The chain runs to 286 residues: 3-amino-tetrahydro-pyrrolizinone reductase (286 aa).

The active-site Proton acceptor is the tyrosine 146.

Belongs to the short-chain dehydrogenases/reductases (SDR) family.

It catalyses the reaction 3-amino-5,6,7,7a-tetrahydro-1H-pyrrolizin-1-one + AH2 = 3-amino-tetrahydro-1H-pyrrolizin-1-ol + A. In terms of biological role, involved in the biosynthetic pathway of pyrrolizwilline, a pyrrolizidine alkaloid. Catalyzes the reduction of 3-amino-tetrahydro-pyrrolizinone to 3-amino-tetrahydro-pyrrolizinol. This Xenorhabdus hominickii protein is 3-amino-tetrahydro-pyrrolizinone reductase (xhpD).